The chain runs to 509 residues: Glutamyl-tRNA(Gln) amidotransferase subunit B, mitochondrial (509 aa).

Belongs to the GatB/GatE family. GatB subfamily. As to quaternary structure, subunit of the heterotrimeric GatFAB amidotransferase (AdT) complex, composed of A, B and F subunits.

Its subcellular location is the mitochondrion. The catalysed reaction is L-glutamyl-tRNA(Gln) + L-glutamine + ATP + H2O = L-glutaminyl-tRNA(Gln) + L-glutamate + ADP + phosphate + H(+). In terms of biological role, allows the formation of correctly charged Gln-tRNA(Gln) through the transamidation of misacylated Glu-tRNA(Gln) in the mitochondria. The reaction takes place in the presence of glutamine and ATP through an activated gamma-phospho-Glu-tRNA(Gln). In Candida dubliniensis (strain CD36 / ATCC MYA-646 / CBS 7987 / NCPF 3949 / NRRL Y-17841) (Yeast), this protein is Glutamyl-tRNA(Gln) amidotransferase subunit B, mitochondrial.